The following is a 247-amino-acid chain: Tetraspanin-18 (247 aa).

Residues methionine 1 to leucine 15 lie on the Cytoplasmic side of the membrane. A helical transmembrane segment spans residues phenylalanine 16–valine 36. The Extracellular portion of the chain corresponds to aspartate 37–proline 49. A helical membrane pass occupies residues leucine 50–phenylalanine 70. Topologically, residues leucine 71–cysteine 82 are cytoplasmic. A helical membrane pass occupies residues leucine 83–isoleucine 103. The Extracellular portion of the chain corresponds to leucine 104–glycine 222. N-linked (GlcNAc...) asparagine glycosylation is found at asparagine 111 and asparagine 129. A helical transmembrane segment spans residues alanine 223–phenylalanine 243. The Cytoplasmic portion of the chain corresponds to arginine 244–glutamine 247.

Belongs to the tetraspanin (TM4SF) family.

Its subcellular location is the membrane. Maintains CDH6 protein and promotes CDH6-dependent adherens junctions, inhibiting neural crest migration. This chain is Tetraspanin-18, found in Gallus gallus (Chicken).